The primary structure comprises 370 residues: Phospho-N-acetylmuramoyl-pentapeptide-transferase (370 aa).

10 helical membrane passes run Tyr24–Gly44, Thr78–Leu98, Val103–Ala123, Lys138–Pro158, Ala177–Phe197, Gly209–Val229, Gly245–Trp265, Ile273–Cys293, Leu298–Val318, and Thr347–Leu367.

This sequence belongs to the glycosyltransferase 4 family. MraY subfamily. Requires Mg(2+) as cofactor.

The protein resides in the cell inner membrane. It carries out the reaction UDP-N-acetyl-alpha-D-muramoyl-L-alanyl-gamma-D-glutamyl-meso-2,6-diaminopimeloyl-D-alanyl-D-alanine + di-trans,octa-cis-undecaprenyl phosphate = di-trans,octa-cis-undecaprenyl diphospho-N-acetyl-alpha-D-muramoyl-L-alanyl-D-glutamyl-meso-2,6-diaminopimeloyl-D-alanyl-D-alanine + UMP. The protein operates within cell wall biogenesis; peptidoglycan biosynthesis. Catalyzes the initial step of the lipid cycle reactions in the biosynthesis of the cell wall peptidoglycan: transfers peptidoglycan precursor phospho-MurNAc-pentapeptide from UDP-MurNAc-pentapeptide onto the lipid carrier undecaprenyl phosphate, yielding undecaprenyl-pyrophosphoryl-MurNAc-pentapeptide, known as lipid I. This chain is Phospho-N-acetylmuramoyl-pentapeptide-transferase, found in Caulobacter vibrioides (strain NA1000 / CB15N) (Caulobacter crescentus).